The chain runs to 150 residues: Transcription antitermination protein NusB (150 aa).

Belongs to the NusB family.

Involved in transcription antitermination. Required for transcription of ribosomal RNA (rRNA) genes. Binds specifically to the boxA antiterminator sequence of the ribosomal RNA (rrn) operons. The chain is Transcription antitermination protein NusB from Streptococcus pyogenes serotype M3 (strain ATCC BAA-595 / MGAS315).